Reading from the N-terminus, the 467-residue chain is UDP-N-acetylmuramate--L-alanine ligase (467 aa).

114-120 (GTHGKTT) serves as a coordination point for ATP.

The protein belongs to the MurCDEF family.

Its subcellular location is the cytoplasm. It carries out the reaction UDP-N-acetyl-alpha-D-muramate + L-alanine + ATP = UDP-N-acetyl-alpha-D-muramoyl-L-alanine + ADP + phosphate + H(+). Its pathway is cell wall biogenesis; peptidoglycan biosynthesis. Functionally, cell wall formation. The sequence is that of UDP-N-acetylmuramate--L-alanine ligase from Bradyrhizobium diazoefficiens (strain JCM 10833 / BCRC 13528 / IAM 13628 / NBRC 14792 / USDA 110).